The following is a 125-amino-acid chain: Glycine cleavage system H protein (125 aa).

One can recognise a Lipoyl-binding domain in the interval serine 22 to threonine 104. An N6-lipoyllysine modification is found at lysine 63.

Belongs to the GcvH family. The glycine cleavage system is composed of four proteins: P, T, L and H. Requires (R)-lipoate as cofactor.

Its function is as follows. The glycine cleavage system catalyzes the degradation of glycine. The H protein shuttles the methylamine group of glycine from the P protein to the T protein. Is also involved in protein lipoylation via its role as an octanoyl/lipoyl carrier protein intermediate. The chain is Glycine cleavage system H protein from Listeria welshimeri serovar 6b (strain ATCC 35897 / DSM 20650 / CCUG 15529 / CIP 8149 / NCTC 11857 / SLCC 5334 / V8).